The sequence spans 236 residues: Peptidase E (236 aa).

Catalysis depends on charge relay system residues serine 122, aspartate 137, and histidine 159.

It belongs to the peptidase S51 family.

The protein localises to the cytoplasm. The catalysed reaction is Dipeptidase E catalyzes the hydrolysis of dipeptides Asp-|-Xaa. It does not act on peptides with N-terminal Glu, Asn or Gln, nor does it cleave isoaspartyl peptides.. In terms of biological role, hydrolyzes dipeptides containing N-terminal aspartate residues. May play a role in allowing the cell to use peptide aspartate to spare carbon otherwise required for the synthesis of the aspartate family of amino acids. The chain is Peptidase E from Shewanella sp. (strain W3-18-1).